The primary structure comprises 93 residues: Small ribosomal subunit protein uS19 (93 aa).

2 disordered regions span residues 1–24 and 73–93; these read MPRS…AQNE and EFAP…GRRR. 2 stretches are compositionally biased toward basic and acidic residues: residues 9–21 and 81–93; these read PFVD…KVDA and KGHE…GRRR.

This sequence belongs to the universal ribosomal protein uS19 family.

Protein S19 forms a complex with S13 that binds strongly to the 16S ribosomal RNA. The protein is Small ribosomal subunit protein uS19 of Kineococcus radiotolerans (strain ATCC BAA-149 / DSM 14245 / SRS30216).